A 56-amino-acid polypeptide reads, in one-letter code: Large ribosomal subunit protein bL32 (56 aa).

Positions 1 to 37 (MAVQQNKKSRSKRGMRRSHDALSTAQLSVDATSGELH) are disordered. Over residues 7 to 16 (KKSRSKRGMR) the composition is skewed to basic residues. Over residues 21-31 (ALSTAQLSVDA) the composition is skewed to polar residues.

The protein belongs to the bacterial ribosomal protein bL32 family.

This chain is Large ribosomal subunit protein bL32, found in Shewanella loihica (strain ATCC BAA-1088 / PV-4).